Consider the following 200-residue polypeptide: Glutathione S-transferase 1-1 (200 aa).

Positions 1–73 (GSSPCRSVIM…YLVEKYGKTD (73 aa)) constitute a GST N-terminal domain. Residues S2, 43–45 (HTI), and 57–59 (ESR) each bind glutathione. A GST C-terminal domain is found at 79 to 200 (CPKKRAVINQ…AGCLEFKKFF (122 aa)).

This sequence belongs to the GST superfamily. Theta family. As to quaternary structure, homodimer.

It catalyses the reaction RX + glutathione = an S-substituted glutathione + a halide anion + H(+). The catalysed reaction is 1,1,1-trichloro-2,2-bis(4-chlorophenyl)ethane = 1,1-dichloro-2,2-bis(4-chlorophenyl)ethylene + chloride + H(+). Functionally, conjugation of reduced glutathione to a wide number of exogenous and endogenous hydrophobic electrophiles. Has DDT dehydrochlorinase activity. This is Glutathione S-transferase 1-1 (GstD1) from Drosophila mauritiana (Fruit fly).